The sequence spans 485 residues: 4-alpha-glucanotransferase (485 aa).

The protein belongs to the disproportionating enzyme family.

Its subcellular location is the cytoplasm. It carries out the reaction Transfers a segment of a (1-&gt;4)-alpha-D-glucan to a new position in an acceptor, which may be glucose or a (1-&gt;4)-alpha-D-glucan.. In Aquifex aeolicus (strain VF5), this protein is 4-alpha-glucanotransferase (malQ).